The chain runs to 210 residues: Histidine biosynthesis bifunctional protein HisIE (210 aa).

Residues 1–106 (MTKYKIDFSK…SCFNTEVPFS (106 aa)) are phosphoribosyl-AMP cyclohydrolase. The interval 107 to 210 (VQTLAQTVQD…KGERQNIEQW (104 aa)) is phosphoribosyl-ATP pyrophosphohydrolase.

The protein in the N-terminal section; belongs to the PRA-CH family. It in the C-terminal section; belongs to the PRA-PH family.

The protein resides in the cytoplasm. It carries out the reaction 1-(5-phospho-beta-D-ribosyl)-ATP + H2O = 1-(5-phospho-beta-D-ribosyl)-5'-AMP + diphosphate + H(+). It catalyses the reaction 1-(5-phospho-beta-D-ribosyl)-5'-AMP + H2O = 1-(5-phospho-beta-D-ribosyl)-5-[(5-phospho-beta-D-ribosylamino)methylideneamino]imidazole-4-carboxamide. The protein operates within amino-acid biosynthesis; L-histidine biosynthesis; L-histidine from 5-phospho-alpha-D-ribose 1-diphosphate: step 2/9. It functions in the pathway amino-acid biosynthesis; L-histidine biosynthesis; L-histidine from 5-phospho-alpha-D-ribose 1-diphosphate: step 3/9. This Staphylococcus aureus (strain Mu50 / ATCC 700699) protein is Histidine biosynthesis bifunctional protein HisIE (hisI).